Consider the following 418-residue polypeptide: Serine hydroxymethyltransferase (418 aa).

(6S)-5,6,7,8-tetrahydrofolate is bound by residues L121 and 125 to 127 (GHL). K230 carries the post-translational modification N6-(pyridoxal phosphate)lysine. (6S)-5,6,7,8-tetrahydrofolate is bound at residue 355-357 (SPF).

The protein belongs to the SHMT family. Homodimer. It depends on pyridoxal 5'-phosphate as a cofactor.

The protein localises to the cytoplasm. The enzyme catalyses (6R)-5,10-methylene-5,6,7,8-tetrahydrofolate + glycine + H2O = (6S)-5,6,7,8-tetrahydrofolate + L-serine. The protein operates within one-carbon metabolism; tetrahydrofolate interconversion. It participates in amino-acid biosynthesis; glycine biosynthesis; glycine from L-serine: step 1/1. Its function is as follows. Catalyzes the reversible interconversion of serine and glycine with tetrahydrofolate (THF) serving as the one-carbon carrier. This reaction serves as the major source of one-carbon groups required for the biosynthesis of purines, thymidylate, methionine, and other important biomolecules. Also exhibits THF-independent aldolase activity toward beta-hydroxyamino acids, producing glycine and aldehydes, via a retro-aldol mechanism. This chain is Serine hydroxymethyltransferase, found in Streptococcus pneumoniae (strain P1031).